Reading from the N-terminus, the 255-residue chain is Glucanase inhibitor protein 4 (255 aa).

A signal peptide spans 1–21 (MKSITTASFALILFGVGAASA). The Peptidase S1 domain occupies 29-255 (VLGGGAVPSG…ESLGMDQLGH (227 aa)). Cys56 and Cys72 form a disulfide bridge. 4 N-linked (GlcNAc...) asparagine glycosylation sites follow: Asn90, Asn105, Asn110, and Asn160. Intrachain disulfides connect Cys180–Cys192 and Cys202–Cys235.

The protein belongs to the peptidase S1 family. As to quaternary structure, forms an apoplastic complex with host endoglucanases in tomato leaves during P.infestans infection.

The protein resides in the secreted. Functionally, secreted effector that suppresses host plant glucan elicitor-mediated defense responses. Targets host endoglucanases and inhibits the endoglucanase-mediated release of elicitor-active glucan oligosaccharides from P.infestans cell walls. The chain is Glucanase inhibitor protein 4 from Phytophthora infestans (Potato late blight agent).